The chain runs to 161 residues: Small heat shock protein hspJ (161 aa).

Positions Ser52–Glu161 constitute a sHSP domain.

This sequence belongs to the small heat shock protein (HSP20) family.

The chain is Small heat shock protein hspJ (hspJ) from Dictyostelium discoideum (Social amoeba).